Reading from the N-terminus, the 150-residue chain is Nucleoside diphosphate kinase (150 aa).

The ATP site is built by lysine 9, phenylalanine 57, arginine 85, threonine 91, arginine 102, and asparagine 112. Histidine 115 serves as the catalytic Pros-phosphohistidine intermediate.

Belongs to the NDK family. Mg(2+) is required as a cofactor.

It localises to the cytoplasm. The enzyme catalyses a 2'-deoxyribonucleoside 5'-diphosphate + ATP = a 2'-deoxyribonucleoside 5'-triphosphate + ADP. The catalysed reaction is a ribonucleoside 5'-diphosphate + ATP = a ribonucleoside 5'-triphosphate + ADP. Its function is as follows. Major role in the synthesis of nucleoside triphosphates other than ATP. The ATP gamma phosphate is transferred to the NDP beta phosphate via a ping-pong mechanism, using a phosphorylated active-site intermediate. In Methanoregula boonei (strain DSM 21154 / JCM 14090 / 6A8), this protein is Nucleoside diphosphate kinase.